The sequence spans 338 residues: MASISYDGLLRGAAKDIQTLTEASLVHGYFNLELDCPEGKQLREDVLFLESFTKEIFDTPSPQKTIYDFKKLGRFRTTGFKPLGIEEGAKGKSDGFEMFMLPQNELLLPSHQDKLQSPSAVFSHRATLTRCMSNYDAASQLILRRITESLNLDNALLAAHNPSEPSVTNLGFLRYPPQPATSENCGHIAHTDVGTLTILAATQRGLQVINSETQDWTFVDPHPQNEFLLVQFGDCLKFLSGGRVVPSIHRVIPSDNPEEREGTKYTLAYFVRPNEEAVIKDDRGEEWVYGDYHCRKFGAFARPLKEGDRDRMPDRPVGEYDMINIRKFKGLADGVSAA.

The Fe2OG dioxygenase domain maps to 165-273 (PSVTNLGFLR…KYTLAYFVRP (109 aa)). Fe cation contacts are provided by histidine 190, aspartate 192, and histidine 249. 2-oxoglutarate is bound at residue lysine 264.

Belongs to the iron/ascorbate-dependent oxidoreductase family. The cofactor is Fe(2+).

It functions in the pathway antifungal biosynthesis. 2-oxoglutarate-dependent dioxygenase; part of the gene cluster that mediates the biosynthesis of echinocandin B, a fungal lipidated cyclic hexapeptide that acts as an antifungal agent. Linoleoyl-AMP, produced by the fatty-acyl-AMP ligase ecdI, is transferred to the initiation carrier domain (T0) of ecdA. The linoleoyl-S-phosphopantetheinyl-T0 is sequentially extended with L-ornithine, L-threonine, L-proline, L-homotyrosine, L-threonine, and 4R-methyl-L-proline to form the linear hexapeptide. Thereafter, the terminal condensation (C7) performs macrocyclization of the NRPS product and the cyclic scaffold is released from ecdA. All six of the amino acid residues are hydroxylated, including 4R,5R-dihydroxy-L-ornithine, 4R-hydroxyl-L-proline, 3S,4S-dihydroxy-L-homotyrosine, and 3S-hydroxyl-4S-methyl-L-prolin. In the pathway, all the hydroxylation reactions are proposed to occur following completion of the cyclic peptide, so the unhydroxylated precursor produced by ecdA will undergo six rounds of hydroxylation. Five hydroxylase genes (ecdG, ecdH, ecdK, htyE and htyF) are embedded within the echinocandin B (ecd) and L-homotyrosine (hty) clusters. This Aspergillus rugulosus (Emericella rugulosa) protein is 2-oxoglutarate-dependent dioxygenase ecdG.